A 161-amino-acid chain; its full sequence is Anaerobic nitrite reductase Glb1-1 (161 aa).

In terms of domain architecture, Globin spans 8–157 (CFTEEQEALV…LVGAIKSEMK (150 aa)). The Homodimerization signature appears at 41 to 45 (EIAPS). Heme b contacts are provided by S51, K65, H69, K99, T103, and H104. The short motif at 111 to 123 (NEHFEVTKFALLD) is the Homodimerization element.

This sequence belongs to the plant globin family. As to quaternary structure, homodimer. The cofactor is heme b. Mainly expressed in root nodules, and, to a lower extent, in leaves, roots, stems, flowers and fruits. Accumulates in mature root nodules.

It carries out the reaction Fe(III)-heme b-[protein] + nitric oxide + H2O = Fe(II)-heme b-[protein] + nitrite + 2 H(+). Its function is as follows. Phytoglobin that reduces nitrite to nitric oxide (NO) under anoxic conditions (e.g. during flooding or in waterlogged soil) and upon root nodulation. Required for general plant development and during nodulation, especially for the onset of symbiosis. Monitors nitric oxide (NO) levels during early phase of the nitrogen-fixing symbiosis and buffers oxygen in functioning nodules. May not function as an oxygen storage or transport protein. Has an unusually high affinity for O(2) through a hexacoordinate heme iron because of a very low dissociation constant. This chain is Anaerobic nitrite reductase Glb1-1, found in Lotus japonicus (Lotus corniculatus var. japonicus).